The sequence spans 348 residues: Haptoglobin-related protein (348 aa).

A signal peptide (not cleaved) is located at residues 1–18 (MSDLGAVISLLLWGRQLF). In terms of domain architecture, Sushi spans 34 to 87 (FPKPPEIANGYVEHLFRYQCKNYYRLRTEGDGVYTLNDKKQWINKAVGDKLPEC). One can recognise a Peptidase S1 domain in the interval 104–346 (ILGGHLDAKG…IQHWVQKTIA (243 aa)). Intrachain disulfides connect Cys251/Cys282 and Cys293/Cys323.

Belongs to the peptidase S1 family. In terms of tissue distribution, in adult liver the amount of HPR mRNA is at the lower limit of detection, therefore the extent of its expression is at most less than 1000-fold that of the HP1F gene. No HPR mRNA can be detected in fetal liver. Expressed in Hep-G2 and leukemia MOLT-4 cell lines.

The protein resides in the secreted. Its function is as follows. Primate-specific plasma protein associated with apolipoprotein L-I (apoL-I)-containing high-density lipoprotein (HDL). This HDL particle, termed trypanosome lytic factor-1 (TLF-1), mediates human innate immune protection against many species of African trypanosomes. Binds hemoglobin with high affinity and may contribute to the clearance of cell-free hemoglobin to allow hepatic recycling of heme iron. This Homo sapiens (Human) protein is Haptoglobin-related protein (HPR).